Consider the following 486-residue polypeptide: uncharacterized protein (486 aa).

ABC transporter domains are found at residues 2–241 and 249–486; these read VEFK…KVFV and FEKD…LLFL. 36–43 provides a ligand contact to ATP; that stretch reads GKNGEGKS.

It belongs to the ABC transporter superfamily.

This is an uncharacterized protein from Borreliella burgdorferi (strain ATCC 35210 / DSM 4680 / CIP 102532 / B31) (Borrelia burgdorferi).